Consider the following 317-residue polypeptide: Acetyl-coenzyme A carboxylase carboxyl transferase subunit alpha (317 aa).

The CoA carboxyltransferase C-terminal domain occupies 39–293; it reads RLESKAAAAL…EEAIAEGLAG (255 aa).

The protein belongs to the AccA family. As to quaternary structure, acetyl-CoA carboxylase is a heterohexamer composed of biotin carboxyl carrier protein (AccB), biotin carboxylase (AccC) and two subunits each of ACCase subunit alpha (AccA) and ACCase subunit beta (AccD).

The protein localises to the cytoplasm. It catalyses the reaction N(6)-carboxybiotinyl-L-lysyl-[protein] + acetyl-CoA = N(6)-biotinyl-L-lysyl-[protein] + malonyl-CoA. It participates in lipid metabolism; malonyl-CoA biosynthesis; malonyl-CoA from acetyl-CoA: step 1/1. Its function is as follows. Component of the acetyl coenzyme A carboxylase (ACC) complex. First, biotin carboxylase catalyzes the carboxylation of biotin on its carrier protein (BCCP) and then the CO(2) group is transferred by the carboxyltransferase to acetyl-CoA to form malonyl-CoA. The chain is Acetyl-coenzyme A carboxylase carboxyl transferase subunit alpha from Methylobacterium sp. (strain 4-46).